A 242-amino-acid chain; its full sequence is Lectin-like protein At1g53060 (242 aa).

The segment at 3-237 is legume-lectin like; sequence FHGDAEYASE…RHEILDWSFE (235 aa). Ser207 carries the phosphoserine modification.

This sequence belongs to the leguminous lectin family.

In Arabidopsis thaliana (Mouse-ear cress), this protein is Lectin-like protein At1g53060.